A 204-amino-acid polypeptide reads, in one-letter code: Allurin (204 aa).

The signal sequence occupies residues 1 to 19 (MDTFNFIICISALFHSTYG). In terms of domain architecture, SCP spans 36–138 (VDLHNLLRRS…DKMIGHYTQV (103 aa)). Residues 140-161 (WAKTYLLGCGLAFCPGNYYPYV) traverse the membrane as a helical segment.

The protein belongs to the CRISP family. Expressed only in oviduct.

The protein localises to the membrane. It is found in the secreted. Its function is as follows. Involved in sperm chemoattraction. The sequence is that of Allurin (crisp-a) from Xenopus tropicalis (Western clawed frog).